The sequence spans 191 residues: Fe/S biogenesis protein NfuA (191 aa).

[4Fe-4S] cluster is bound by residues Cys149 and Cys152.

The protein belongs to the NfuA family. As to quaternary structure, homodimer. The cofactor is [4Fe-4S] cluster.

Functionally, involved in iron-sulfur cluster biogenesis. Binds a 4Fe-4S cluster, can transfer this cluster to apoproteins, and thereby intervenes in the maturation of Fe/S proteins. Could also act as a scaffold/chaperone for damaged Fe/S proteins. This Pectobacterium carotovorum subsp. carotovorum (strain PC1) protein is Fe/S biogenesis protein NfuA.